Reading from the N-terminus, the 743-residue chain is Merozoite surface protein 9 (743 aa).

The first 23 residues, 1–23 (MMNMKIVLFSLLLFVIRWNIISC), serve as a signal peptide directing secretion. Residues 77–235 (KELLKEKQYT…VNDEDDVNDE (159 aa)) form an interaction with MSP1 and host SLC4A1/Band 3 region. Disordered regions lie at residues 202–282 (KSQG…ATAY), 459–487 (DNQA…PTED), 512–540 (NNTP…ENFD), and 666–743 (VDAL…EESK). Residues 211 to 224 (SQNQNENNDNQKYQ) show a composition bias toward polar residues. Repeat copies occupy residues 226-231 (VNDEDD), 232-237 (VNDEED), 238-243 (TNDDED), 244-249 (TNDEED), 250-255 (TNDDED), 256-261 (TNDDED), 262-267 (TNDEED), and 268-273 (TNDEED). Residues 226-273 (VNDEDDVNDEEDTNDDEDTNDEEDTNDDEDTNDDEDTNDEEDTNDEED) are 8 X 6 AA tandem repeats of [VT]-N-D-[ED]-[ED]-D. Residues 226 to 274 (VNDEDDVNDEEDTNDDEDTNDEEDTNDDEDTNDDEDTNDEEDTNDEEDH) are compositionally biased toward acidic residues. Positions 364–528 (LKDNLINYEF…PPTQSKKKNK (165 aa)) are interaction with MSP1 and host SLC4A1/Band 3. Positions 459–473 (DNQAVDTKSMEEPKV) are enriched in basic and acidic residues. Positions 512 to 521 (NNTPNVVPPT) are enriched in low complexity. Residues 644-733 (NQETEEEMEK…QEEEEEEEIV (90 aa)) are a coiled coil. Over residues 672–721 (KNKEEEEKEKEKEEKEKEEKEKEKEEKEKEEKEKEEKEKEEKEEEKKEKE) the composition is skewed to basic and acidic residues. Over residues 722-733 (EEQEEEEEEEIV) the composition is skewed to acidic residues.

Belongs to the plasmodium ABRA family. As to quaternary structure, forms a complex composed of MSP1, MSP6, MSP7, MSP9 and MSP3; within the complex, MSP6 and MSP9 mediate the binding to the host erythrocyte. Interacts with MSP1 subunits p19 and p42; the interaction is direct. Interacts with host SLC4A1/Band 3 protein (via the 5ABC region). MSP1 subunits p19 or p42, and MSP9 form a co-ligand complex that interacts with host SLC4A1/Band 3 protein. In terms of processing, not glycosylated.

It localises to the cell membrane. The protein resides in the parasitophorous vacuole lumen. Its subcellular location is the secreted. During the asexual blood stage, involved in the sialic acid-independent (SAID) merozoite invasion of host erythrocytes by binding to host SLC4A1/Band 3 protein on the surface of the host erythrocyte. The polypeptide is Merozoite surface protein 9 (Plasmodium falciparum (isolate 3D7)).